The following is a 118-amino-acid chain: Large ribosomal subunit protein bL20 (118 aa).

Belongs to the bacterial ribosomal protein bL20 family.

Binds directly to 23S ribosomal RNA and is necessary for the in vitro assembly process of the 50S ribosomal subunit. It is not involved in the protein synthesizing functions of that subunit. The sequence is that of Large ribosomal subunit protein bL20 from Photorhabdus laumondii subsp. laumondii (strain DSM 15139 / CIP 105565 / TT01) (Photorhabdus luminescens subsp. laumondii).